The following is a 1443-amino-acid chain: Lysophospholipase NTE1 (1443 aa).

The Lumenal portion of the chain corresponds to 1–59 (MEEELAIEDLPRLTGTVSLNNGLLHSIYNETTVFKILRWSLVEIPKYILKLMSKNLEIN). A helical membrane pass occupies residues 60 to 80 (LNVSSILIITLLIAAGILVIV). Residues 81-1443 (RYKFLTGYSE…RIKMYRRNTM (1363 aa)) are Cytoplasmic-facing. Residues 103–118 (ALGQQSTNYPKSTSSG) show a composition bias toward polar residues. 2 disordered regions span residues 103–122 (ALGQ…LFVE) and 199–251 (KYDE…GKMH). Residues 210-235 (EGEEADEDDEEEEKEVGDDGDDEMDV) are compositionally biased toward acidic residues. A nucleoside 3',5'-cyclic phosphate-binding positions include 619 to 750 (LYKR…LKSL) and 746 to 871 (KLKS…VASK). The PNPLA domain maps to 1136 to 1300 (LVLGGGGSRG…LDNLPVMEMK (165 aa)). The GXGXXG signature appears at 1140–1145 (GGGSRG). Positions 1167 to 1171 (GTSIG) match the GXSXG motif. Residue S1169 is the Nucleophile of the active site. Catalysis depends on D1287, which acts as the Proton acceptor. Residues 1287–1289 (DGG) carry the DGA/G motif.

This sequence belongs to the NTE family.

It localises to the endoplasmic reticulum membrane. It carries out the reaction a 1-acyl-sn-glycero-3-phosphocholine + H2O = sn-glycerol 3-phosphocholine + a fatty acid + H(+). Its activity is regulated as follows. Inhibited by organophosphorus esters. Its function is as follows. Intracellular phospholipase B that catalyzes the double deacylation of phosphatidylcholine (PC) to glycerophosphocholine (GroPCho). Plays an important role in membrane lipid homeostasis. Responsible for the rapid PC turnover in response to inositol, elevated temperatures, or when choline is present in the growth medium. The chain is Lysophospholipase NTE1 (NTE1) from Lodderomyces elongisporus (strain ATCC 11503 / CBS 2605 / JCM 1781 / NBRC 1676 / NRRL YB-4239) (Yeast).